Consider the following 431-residue polypeptide: MDAASTLTHAPVSQPWQSLAQGLGFVNEHEGYWWSKLGPPLGKMMNWARYSTSEQYRVLAFLYKYLLPACGPKPGDDGELFWKVFISYDYTPIQLSLNFHNGKMTLRTANIPISDKSGTADDPINQQASVDAIIRQERVLPSQDLRWFNHFASQYFFDKDTAASLKTKVDKLRVQQGVQCMLSHDFPERDVQCKVAFCPLWKAVATGLSNKEIIWDSILGLGDDIIPYKRALAVLEQYTSSENAAKAGVRPVFFAFDTVLKDNYKSSRIKIYYLTTRTAFNSMVDIYTLGGLLKGPDIQKGVEALEVLWKAVLNVPEGWPDDKDLPMNPHRCAAVIFNFELWPGAEFPSPKAYLPAHYYGRPDLEIADGMDYFFKQQGLDGVYGSYKENYLKCLSEVRTHRTNSQPSTMIFLFHSKGPMPTLRCTTSPSYL.

Residue 85–86 (FI) participates in L-tryptophan binding. Residues arginine 107, lysine 194, arginine 268, lysine 270, tyrosine 272, and tyrosine 353 each contribute to the substrate site.

It belongs to the tryptophan dimethylallyltransferase family.

It participates in secondary metabolite biosynthesis. Its function is as follows. Indole diterpene prenyltransferase; part of the gene cluster that mediates the biosynthesis of the indole diterpenes nodulisporic acids (NA). Nodulisporic acid A (NAA) and its chemically modified derivatives are of particular significance because of their highly potent insecticidal activity against blood-feeding arthropods and lack of observable adverse effects on mammals, in particular the tremogenicity associated with the paspaline-derived IDTs is not observed. The geranylgeranyl diphosphate (GGPP) synthase ggs1, localized outside of the cluster, is proposed to catalyze the first step in nodulisporic acid biosynthesis via conversion of farnesyl pyrophosphate and isopentyl pyrophosphate into geranylgeranyl pyrophosphate (GGPP). Condensation of indole-3-glycerol phosphate with GGPP by the prenyl transferase nodC then forms 3-geranylgeranylindole (3-GGI). Epoxidation by the FAD-dependent monooxygenase nodM leads to a single-epoxidized-GGI that is substrate of the terpene cyclase nodB for cyclization to yield emindole SB. The terminal methyl carbon, C28, of emindole SB is then oxidized by the cytochrome P450 monooxygenase nodW to produce nodulisporic acid F (NAF), the pentacyclic core of NAA. NAF is converted to nodulisporic acid E (NAE) via prenylation. This step is probably performed by one of the indole diterpene prenyltransferases nodD1 or nodD2. Several oxidation steps performed by the FAD-linked oxidoreductase nodO and one of the cytochrome P450 monooxygenase nodR, nodX or nodZ further convert NAE to nodulisporic acid D (NAD). NAD is substrate of cytochrome P450 monooxygenase nodJ to produce the precursor of nodulisporic acid C (NAC), converted to NAC by one of the indole diterpene prenyltransferases nodD1 or nodD2. The FAD-dependent monooxygenase nodY2 then oxidizes NAC to nodulisporic acid B (NAB). Finally NAB is converted to NAA by one of the cytochrome P450 monooxygenases nodR, nodX or nodZ. In Hypoxylon pulicicidum, this protein is Indole diterpene prenyltransferase nodD1.